The primary structure comprises 38 residues: L-amino-acid oxidase (38 aa).

The protein belongs to the flavin monoamine oxidase family. FIG1 subfamily. In terms of assembly, homodimer; non-covalently linked. It depends on FAD as a cofactor. In terms of processing, N-glycosylated. Expressed by the venom gland.

The protein resides in the secreted. The enzyme catalyses an L-alpha-amino acid + O2 + H2O = a 2-oxocarboxylate + H2O2 + NH4(+). The catalysed reaction is L-leucine + O2 + H2O = 4-methyl-2-oxopentanoate + H2O2 + NH4(+). It carries out the reaction L-phenylalanine + O2 + H2O = 3-phenylpyruvate + H2O2 + NH4(+). It catalyses the reaction L-tryptophan + O2 + H2O = indole-3-pyruvate + H2O2 + NH4(+). The enzyme catalyses L-methionine + O2 + H2O = 4-methylsulfanyl-2-oxobutanoate + H2O2 + NH4(+). The catalysed reaction is L-arginine + O2 + H2O = 5-guanidino-2-oxopentanoate + H2O2 + NH4(+). It carries out the reaction L-2-aminohexanoate + O2 + H2O = 2-oxohexanoate + H2O2 + NH4(+). It catalyses the reaction L-2-aminopentanoate + O2 + H2O = 2-oxopentanoate + H2O2 + NH4(+). The enzyme catalyses L-tyrosine + O2 + H2O = 3-(4-hydroxyphenyl)pyruvate + H2O2 + NH4(+). Functionally, catalyzes an oxidative deamination of predominantly hydrophobic and aromatic L-amino acids, thus producing hydrogen peroxide that may contribute to the diverse toxic effects of this enzyme. Is very active against L-Phe and L-Tyr, moderately active against L-Trp, L-Met, L-Leu, L-norleucine (L-2-aminohexanoate), L-Arg and L-norvaline (L-2-aminopentanoate), and slightly active against L-His, L-cystine, and L-Ile. L-Gln, L-Lys, L-Asn, L-ornithine, L-Ala and L-Val are oxidized very slowly. Exhibits diverse biological activities, such as hemorrhage, hemolysis, edema, apoptosis of vascular endothelial cells or tumor cell lines, antibacterial and antiparasitic activities. This protein inhibits both agonist- and shear stress-induced platelet aggregation (SIPA). Effects of snake L-amino oxidases on platelets are controversial, since they either induce aggregation or inhibit agonist-induced aggregation. These different effects are probably due to different experimental conditions. The sequence is that of L-amino-acid oxidase from Naja kaouthia (Monocled cobra).